We begin with the raw amino-acid sequence, 527 residues long: Monooxygenase aurF (527 aa).

The N-terminal stretch at 1-19 (MPNPTVAIVGLGALGLVTL) is a signal peptide. An N-linked (GlcNAc...) asparagine glycan is attached at N59.

It belongs to the FMO family. Might be part of an extracellular enzyme complex composed of GIP1, aurF, aurO and aurS. Requires FAD as cofactor.

The protein localises to the secreted. It is found in the extracellular space. It participates in pigment biosynthesis. Its function is as follows. Monooxygenase; part of the gene cluster that mediates the biosynthesis of aurofusarin, a red mycelium pigment which is acting as a mycotoxin. The first step is performed by the polyketide synthase which condenses one acetyl-CoA and 6 malonyl-CoA units to form the first intermediate, the cyclic heptaketide and yellow pigment YWA1. The C2 hydroxyl group in the pyrone ring of YWA1 is probably formed during ring closure by an aldol-type cyclization reaction. The dehydratase aurZ then acts as the first tailoring enzyme in the aurofusarin biosynthetic pathway by converting YWA1 to nor-rubrofusarin. Nor-rubrofusarin is then methylated to rubrofusarin by the O-methyltransferase aurJ. Rubrofusarin is then transported across the plasma membrane by the rubrofusarin-specific pump aurT for further enzymatic processing by the extracellular complex composed of GIP1, aurF, aurO and aurS to yield aurofusarin. In Gibberella zeae (strain ATCC MYA-4620 / CBS 123657 / FGSC 9075 / NRRL 31084 / PH-1) (Wheat head blight fungus), this protein is Monooxygenase aurF.